The chain runs to 142 residues: Hemoglobin subunit alpha (142 aa).

Positions 2-142 (VLSPADKSNV…VSTVLTSKYR (141 aa)) constitute a Globin domain. A Phosphoserine modification is found at Ser-4. N6-succinyllysine occurs at positions 8 and 12. Lys-17 bears the N6-acetyllysine; alternate mark. Lys-17 is modified (N6-succinyllysine; alternate). At Tyr-25 the chain carries Phosphotyrosine. Ser-36 bears the Phosphoserine mark. Residue Lys-41 is modified to N6-succinyllysine. The residue at position 50 (Ser-50) is a Phosphoserine. His-59 lines the O2 pocket. A heme b-binding site is contributed by His-88. At Ser-103 the chain carries Phosphoserine. A Phosphothreonine modification is found at Thr-109. Phosphoserine occurs at positions 125 and 132. 2 positions are modified to phosphothreonine: Thr-135 and Thr-138. Ser-139 is subject to Phosphoserine.

It belongs to the globin family. Heterotetramer of two alpha chains and two beta chains. As to expression, red blood cells.

Functionally, involved in oxygen transport from the lung to the various peripheral tissues. In terms of biological role, hemopressin acts as an antagonist peptide of the cannabinoid receptor CNR1. Hemopressin-binding efficiently blocks cannabinoid receptor CNR1 and subsequent signaling. The chain is Hemoglobin subunit alpha (HBA) from Macaca fuscata fuscata (Japanese macaque).